The sequence spans 76 residues: Exodeoxyribonuclease 7 small subunit (76 aa).

It belongs to the XseB family. In terms of assembly, heterooligomer composed of large and small subunits.

Its subcellular location is the cytoplasm. It catalyses the reaction Exonucleolytic cleavage in either 5'- to 3'- or 3'- to 5'-direction to yield nucleoside 5'-phosphates.. Bidirectionally degrades single-stranded DNA into large acid-insoluble oligonucleotides, which are then degraded further into small acid-soluble oligonucleotides. The sequence is that of Exodeoxyribonuclease 7 small subunit from Staphylococcus epidermidis (strain ATCC 35984 / DSM 28319 / BCRC 17069 / CCUG 31568 / BM 3577 / RP62A).